Consider the following 222-residue polypeptide: Small ribosomal subunit protein uS3 (222 aa).

The 69-residue stretch at 38-106 folds into the KH type-2 domain; sequence IRKFISEKLA…NVHINIVEIK (69 aa).

This sequence belongs to the universal ribosomal protein uS3 family. As to quaternary structure, part of the 30S ribosomal subunit. Forms a tight complex with proteins S10 and S14.

In terms of biological role, binds the lower part of the 30S subunit head. Binds mRNA in the 70S ribosome, positioning it for translation. The polypeptide is Small ribosomal subunit protein uS3 (Lactobacillus gasseri (strain ATCC 33323 / DSM 20243 / BCRC 14619 / CIP 102991 / JCM 1131 / KCTC 3163 / NCIMB 11718 / NCTC 13722 / AM63)).